A 474-amino-acid polypeptide reads, in one-letter code: Glutathione synthetase (474 aa).

Ala-2 is modified (N-acetylalanine). Arg-125 is a substrate binding site. ATP is bound at residue Glu-144. Mg(2+)-binding residues include Glu-144 and Asn-146. Substrate contacts are provided by residues 148-151, 214-216, Gln-220, and 267-270; these read ISAS, ERN, and RDGY. ATP is bound by residues Lys-305, 364 to 373, Tyr-375, and 398 to 401; these read KPQREGGGNN and MEKI. Glu-368 serves as a coordination point for Mg(2+). Phosphoserine is present on Ser-415. An ATP-binding site is contributed by Glu-425. Arg-450 contacts substrate. Lys-452 and Asp-458 together coordinate ATP. 461 to 462 is a binding site for substrate; it reads VA.

Belongs to the eukaryotic GSH synthase family. As to quaternary structure, homodimer. Mg(2+) serves as cofactor.

The enzyme catalyses gamma-L-glutamyl-L-cysteine + glycine + ATP = glutathione + ADP + phosphate + H(+). It catalyses the reaction gamma-L-glutamyl-(2S)-2-aminobutanoate + glycine + ATP = ophthalmate + ADP + phosphate + H(+). The protein operates within sulfur metabolism; glutathione biosynthesis; glutathione from L-cysteine and L-glutamate: step 2/2. In terms of biological role, catalyzes the production of glutathione from gamma-glutamylcysteine and glycine in an ATP-dependent manner. Glutathione (gamma-glutamylcysteinylglycine, GSH) is the most abundant intracellular thiol in living aerobic cells and is required for numerous processes including the protection of cells against oxidative damage, amino acid transport, the detoxification of foreign compounds, the maintenance of protein sulfhydryl groups in a reduced state and acts as a cofactor for a number of enzymes. Participates in ophthalmate biosynthesis in hepatocytes. The chain is Glutathione synthetase from Mus musculus (Mouse).